Reading from the N-terminus, the 368-residue chain is uncharacterized protein (368 aa).

This is an uncharacterized protein from Rickettsia prowazekii (strain Madrid E).